The following is a 217-amino-acid chain: Superoxide dismutase [Cu-Zn], chloroplastic (217 aa).

The transit peptide at 1-63 (MAAHSIFTTT…TTPKPLTVFA (63 aa)) directs the protein to the chloroplast. Residues His-109, His-111, and His-126 each contribute to the Cu cation site. Residues Cys-120 and Cys-209 are joined by a disulfide bond. Residues His-126, His-134, His-143, and Asp-146 each coordinate Zn(2+). His-183 contacts Cu cation.

This sequence belongs to the Cu-Zn superoxide dismutase family. Homotetramer. Cu cation is required as a cofactor. Requires Zn(2+) as cofactor.

It localises to the plastid. Its subcellular location is the chloroplast. The enzyme catalyses 2 superoxide + 2 H(+) = H2O2 + O2. In terms of biological role, destroys radicals which are normally produced within the cells and which are toxic to biological systems. In Solanum lycopersicum (Tomato), this protein is Superoxide dismutase [Cu-Zn], chloroplastic (SODCP.2).